An 891-amino-acid polypeptide reads, in one-letter code: DNA mismatch repair protein MutS (891 aa).

Residue 634 to 641 participates in ATP binding; sequence GPNMGGKS.

The protein belongs to the DNA mismatch repair MutS family.

Its function is as follows. This protein is involved in the repair of mismatches in DNA. It is possible that it carries out the mismatch recognition step. This protein has a weak ATPase activity. In Burkholderia pseudomallei (strain 668), this protein is DNA mismatch repair protein MutS.